The chain runs to 101 residues: Small ribosomal subunit protein uS14 (101 aa).

It belongs to the universal ribosomal protein uS14 family. In terms of assembly, part of the 30S ribosomal subunit. Contacts proteins S3 and S10.

Its function is as follows. Binds 16S rRNA, required for the assembly of 30S particles and may also be responsible for determining the conformation of the 16S rRNA at the A site. This chain is Small ribosomal subunit protein uS14, found in Shewanella putrefaciens (strain CN-32 / ATCC BAA-453).